A 146-amino-acid polypeptide reads, in one-letter code: Hemoglobin subunit beta (146 aa).

V1 carries the N-acetylvaline modification. The Globin domain maps to 2–146; that stretch reads HLTGEEKTAV…VANALAHKYH (145 aa). At T12 the chain carries Phosphothreonine. S44 carries the phosphoserine modification. At K59 the chain carries N6-acetyllysine. H63 lines the heme b pocket. K82 is subject to N6-acetyllysine. H92 lines the heme b pocket. C93 is modified (S-nitrosocysteine). An N6-acetyllysine modification is found at K144.

This sequence belongs to the globin family. Heterotetramer of two alpha chains and two beta chains. In terms of tissue distribution, red blood cells.

In terms of biological role, involved in oxygen transport from the lung to the various peripheral tissues. This chain is Hemoglobin subunit beta (HBB), found in Nasua nasua (Ring-tailed coati).